A 227-amino-acid chain; its full sequence is Cytochrome c oxidase subunit 2 (227 aa).

Topologically, residues M1–S14 are mitochondrial intermembrane. Residues P15–T45 form a helical membrane-spanning segment. Residues L46–Q59 are Mitochondrial matrix-facing. A helical transmembrane segment spans residues E60–T87. Residues D88–L227 lie on the Mitochondrial intermembrane side of the membrane. Cu cation-binding residues include H161, C196, E198, C200, H204, and M207. Mg(2+) is bound at residue E198.

The protein belongs to the cytochrome c oxidase subunit 2 family. In terms of assembly, component of the cytochrome c oxidase (complex IV, CIV), a multisubunit enzyme composed of 14 subunits. The complex is composed of a catalytic core of 3 subunits MT-CO1, MT-CO2 and MT-CO3, encoded in the mitochondrial DNA, and 11 supernumerary subunits COX4I, COX5A, COX5B, COX6A, COX6B, COX6C, COX7A, COX7B, COX7C, COX8 and NDUFA4, which are encoded in the nuclear genome. The complex exists as a monomer or a dimer and forms supercomplexes (SCs) in the inner mitochondrial membrane with NADH-ubiquinone oxidoreductase (complex I, CI) and ubiquinol-cytochrome c oxidoreductase (cytochrome b-c1 complex, complex III, CIII), resulting in different assemblies (supercomplex SCI(1)III(2)IV(1) and megacomplex MCI(2)III(2)IV(2)). Found in a complex with TMEM177, COA6, COX18, COX20, SCO1 and SCO2. Interacts with TMEM177 in a COX20-dependent manner. Interacts with COX20. Interacts with COX16. Cu cation serves as cofactor.

It localises to the mitochondrion inner membrane. It catalyses the reaction 4 Fe(II)-[cytochrome c] + O2 + 8 H(+)(in) = 4 Fe(III)-[cytochrome c] + 2 H2O + 4 H(+)(out). In terms of biological role, component of the cytochrome c oxidase, the last enzyme in the mitochondrial electron transport chain which drives oxidative phosphorylation. The respiratory chain contains 3 multisubunit complexes succinate dehydrogenase (complex II, CII), ubiquinol-cytochrome c oxidoreductase (cytochrome b-c1 complex, complex III, CIII) and cytochrome c oxidase (complex IV, CIV), that cooperate to transfer electrons derived from NADH and succinate to molecular oxygen, creating an electrochemical gradient over the inner membrane that drives transmembrane transport and the ATP synthase. Cytochrome c oxidase is the component of the respiratory chain that catalyzes the reduction of oxygen to water. Electrons originating from reduced cytochrome c in the intermembrane space (IMS) are transferred via the dinuclear copper A center (CU(A)) of subunit 2 and heme A of subunit 1 to the active site in subunit 1, a binuclear center (BNC) formed by heme A3 and copper B (CU(B)). The BNC reduces molecular oxygen to 2 water molecules using 4 electrons from cytochrome c in the IMS and 4 protons from the mitochondrial matrix. The sequence is that of Cytochrome c oxidase subunit 2 (MT-CO2) from Macaca fascicularis (Crab-eating macaque).